Consider the following 522-residue polypeptide: Bifunctional purine biosynthesis protein PurH (522 aa).

The region spanning 1-145 is the MGS-like domain; sequence MKPIARALIS…KNHAAVTVIV (145 aa).

It belongs to the PurH family.

It carries out the reaction (6R)-10-formyltetrahydrofolate + 5-amino-1-(5-phospho-beta-D-ribosyl)imidazole-4-carboxamide = 5-formamido-1-(5-phospho-D-ribosyl)imidazole-4-carboxamide + (6S)-5,6,7,8-tetrahydrofolate. The enzyme catalyses IMP + H2O = 5-formamido-1-(5-phospho-D-ribosyl)imidazole-4-carboxamide. The protein operates within purine metabolism; IMP biosynthesis via de novo pathway; 5-formamido-1-(5-phospho-D-ribosyl)imidazole-4-carboxamide from 5-amino-1-(5-phospho-D-ribosyl)imidazole-4-carboxamide (10-formyl THF route): step 1/1. It participates in purine metabolism; IMP biosynthesis via de novo pathway; IMP from 5-formamido-1-(5-phospho-D-ribosyl)imidazole-4-carboxamide: step 1/1. In Nitrosococcus oceani (strain ATCC 19707 / BCRC 17464 / JCM 30415 / NCIMB 11848 / C-107), this protein is Bifunctional purine biosynthesis protein PurH.